A 717-amino-acid polypeptide reads, in one-letter code: Pentatricopeptide repeat-containing protein At1g53600, mitochondrial (717 aa).

The N-terminal 47 residues, 1–47 (MVMRPISNKGLIYRHNICLRCNSTLAVSNHEPITQKTRNFLETTTTS), are a transit peptide targeting the mitochondrion. PPR repeat units follow at residues 49–79 (AIFQ…MSNR), 80–110 (SIVS…MPVR), 111–142 (VTTS…IPEK), 143–173 (NAVS…TPVK), 176–206 (DSVA…MAVK), 207–241 (EVVS…NVIT), 242–272 (WTAM…GDVK), 274–308 (NSNT…PLEF), 309–339 (DLFL…MKNK), 340–374 (DSVS…DMVS), 375–401 (WTDM…MPEK), 402–436 (DNIT…EVCP), 437–471 (NSYT…NIVN), 472–502 (DLSV…ISEP), 503–537 (NIVS…GKEP), 538–568 (NGVT…MKSS), and 574–604 (GPDH…MPCK). The tract at residues 609–684 (VWGSLLSASK…DPGSSWIILK (76 aa)) is type E motif. The interval 685 to 715 (GEVHNFLAGDESQLNLEEIGFTLKMIRKEME) is type E(+) motif.

This sequence belongs to the PPR family. PCMP-E subfamily.

It localises to the mitochondrion. In Arabidopsis thaliana (Mouse-ear cress), this protein is Pentatricopeptide repeat-containing protein At1g53600, mitochondrial (PCMP-E63).